A 195-amino-acid chain; its full sequence is Imidazoleglycerol-phosphate dehydratase (195 aa).

The protein belongs to the imidazoleglycerol-phosphate dehydratase family.

Its subcellular location is the cytoplasm. The enzyme catalyses D-erythro-1-(imidazol-4-yl)glycerol 3-phosphate = 3-(imidazol-4-yl)-2-oxopropyl phosphate + H2O. Its pathway is amino-acid biosynthesis; L-histidine biosynthesis; L-histidine from 5-phospho-alpha-D-ribose 1-diphosphate: step 6/9. The polypeptide is Imidazoleglycerol-phosphate dehydratase (Beijerinckia indica subsp. indica (strain ATCC 9039 / DSM 1715 / NCIMB 8712)).